We begin with the raw amino-acid sequence, 591 residues long: 5'-nucleotidase domain-containing protein DDB_G0275467 (591 aa).

Composition is skewed to low complexity over residues 38 to 50 (STTTTSGIKSYST) and 68 to 78 (QHQQQQPQQHQ). The tract at residues 38–88 (STTTTSGIKSYSTHNRSNNDTHTSKSNTIDQHQQQQPQQHQNNDNKHLFTP) is disordered. D165 acts as the Nucleophile in catalysis. D165 and D167 together coordinate Mg(2+). D167 (proton donor) is an active-site residue. 305 to 313 (TAAVGKVHL) contacts substrate. D450 contributes to the Mg(2+) binding site.

Belongs to the 5'(3')-deoxyribonucleotidase family. It depends on Mg(2+) as a cofactor.

The protein is 5'-nucleotidase domain-containing protein DDB_G0275467 of Dictyostelium discoideum (Social amoeba).